The chain runs to 471 residues: Retinoic acid receptor RXR-beta-A (471 aa).

Residues 1-34 form a disordered region; that stretch reads MGDSRDSRSPDSSSVSSPPSGQRSPPLAPSAAAM. The interval 1 to 102 is modulating; the sequence is MGDSRDSRSP…HAVSSSDDVK (102 aa). The span at 10–25 shows a compositional bias: low complexity; it reads PDSSSVSSPPSGQRSP. Positions 122 to 197 form a DNA-binding region, nuclear receptor; sequence KRLCAICGDR…MGMKREVVQD (76 aa). 2 NR C4-type zinc fingers span residues 125-145 and 161-185; these read CAICGDRSSGKHYGVYSCEGC and CRDNKDCLVDKRQRNRCQYCRYQKC. A compositionally biased stretch (basic and acidic residues) spans 196–216; the sequence is QDERQRSVQEERQRNKERDGE. A disordered region spans residues 196 to 226; sequence QDERQRSVQEERQRNKERDGEVESSSAANEE. Residues 198 to 221 form a hinge region; that stretch reads ERQRSVQEERQRNKERDGEVESSS. Residues 224–467 enclose the NR LBD domain; sequence NEEMPVEKIL…TFLMEMLEAP (244 aa).

It belongs to the nuclear hormone receptor family. NR2 subfamily. Homodimer. Heterodimer; with a rar molecule. Binds DNA preferentially as a rar/rxr heterodimer. Heterodimerizes with rarga. As to expression, shows uniform expression from the blastula to mid-gastrula stages. At 12 hours post-fertilization (hpf), expressed ubiquitously but more weakly. At 24 hpf, restricted to the ventral diencephalon, pharangeal endoderm and trunk and tail mesoderm; mesoderm expression is in medial cells of each somite along the dorsoventral axis, forming stripes. At 48 hpf, expressed in forebrain, eye, midbrain and anterior hindbrain.

The protein resides in the nucleus. Its function is as follows. Receptor for retinoic acid. Retinoic acid receptors bind as heterodimers to their target response elements in response to their ligands, all-trans or 9-cis retinoic acid, and regulate gene expression in various biological processes. The rar/rxr heterodimers bind to the retinoic acid response elements (RARE) composed of tandem 5'-AGGTCA-3' sites known as DR1-DR5. The high affinity ligand for rxrs is 9-cis retinoic acid. This Danio rerio (Zebrafish) protein is Retinoic acid receptor RXR-beta-A (rxrba).